The following is an 89-amino-acid chain: Small ribosomal subunit protein uS15 (89 aa).

Belongs to the universal ribosomal protein uS15 family. As to quaternary structure, part of the 30S ribosomal subunit. Forms a bridge to the 50S subunit in the 70S ribosome, contacting the 23S rRNA.

Its function is as follows. One of the primary rRNA binding proteins, it binds directly to 16S rRNA where it helps nucleate assembly of the platform of the 30S subunit by binding and bridging several RNA helices of the 16S rRNA. Forms an intersubunit bridge (bridge B4) with the 23S rRNA of the 50S subunit in the ribosome. This chain is Small ribosomal subunit protein uS15, found in Ligilactobacillus salivarius (strain UCC118) (Lactobacillus salivarius).